The following is a 118-amino-acid chain: Small ribosomal subunit protein uS13 (118 aa).

The disordered stretch occupies residues 94–118 (GLPLRGQRTKTNARTRKGPRKPIRK).

This sequence belongs to the universal ribosomal protein uS13 family. Part of the 30S ribosomal subunit. Forms a loose heterodimer with protein S19. Forms two bridges to the 50S subunit in the 70S ribosome.

In terms of biological role, located at the top of the head of the 30S subunit, it contacts several helices of the 16S rRNA. In the 70S ribosome it contacts the 23S rRNA (bridge B1a) and protein L5 of the 50S subunit (bridge B1b), connecting the 2 subunits; these bridges are implicated in subunit movement. Contacts the tRNAs in the A and P-sites. The polypeptide is Small ribosomal subunit protein uS13 (Alcanivorax borkumensis (strain ATCC 700651 / DSM 11573 / NCIMB 13689 / SK2)).